The following is a 1006-amino-acid chain: Probable sulfite reductase [NADPH] flavoprotein component (1006 aa).

An FAD-binding FR-type domain is found at 622–852; that stretch reads EKVFTVHVRA…AVKTSVMKLP (231 aa). FAD contacts are provided by residues 658–669 and 788–798; these read YDIGEALGVYGV and IKRREYSISSS.

Requires FAD as cofactor. FMN is required as a cofactor.

The catalysed reaction is hydrogen sulfide + 3 NADP(+) + 3 H2O = sulfite + 3 NADPH + 4 H(+). The protein operates within sulfur metabolism; hydrogen sulfide biosynthesis; hydrogen sulfide from sulfite (NADPH route): step 1/1. In terms of biological role, this enzyme catalyzes the 6-electron reduction of sulfite to sulfide. This is one of several activities required for the biosynthesis of L-cysteine from sulfate. The sequence is that of Probable sulfite reductase [NADPH] flavoprotein component from Schizosaccharomyces pombe (strain 972 / ATCC 24843) (Fission yeast).